The primary structure comprises 431 residues: Na(+)-translocating NADH-quinone reductase subunit F (431 aa).

Residues Ile10–Leu30 form a helical membrane-spanning segment. The 93-residue stretch at Cys41–Tyr133 folds into the 2Fe-2S ferredoxin-type domain. Positions 76, 82, 85, and 117 each coordinate [2Fe-2S] cluster. The region spanning Ala136–Lys286 is the FAD-binding FR-type domain.

This sequence belongs to the NqrF family. Composed of six subunits; NqrA, NqrB, NqrC, NqrD, NqrE and NqrF. It depends on [2Fe-2S] cluster as a cofactor. The cofactor is FAD.

The protein localises to the cell inner membrane. It catalyses the reaction a ubiquinone + n Na(+)(in) + NADH + H(+) = a ubiquinol + n Na(+)(out) + NAD(+). NQR complex catalyzes the reduction of ubiquinone-1 to ubiquinol by two successive reactions, coupled with the transport of Na(+) ions from the cytoplasm to the periplasm. The first step is catalyzed by NqrF, which accepts electrons from NADH and reduces ubiquinone-1 to ubisemiquinone by a one-electron transfer pathway. The protein is Na(+)-translocating NADH-quinone reductase subunit F of Chlamydia trachomatis serovar A (strain ATCC VR-571B / DSM 19440 / HAR-13).